Here is a 442-residue protein sequence, read N- to C-terminus: Putative amino acid transporter YuiF (442 aa).

A run of 11 helical transmembrane segments spans residues 21 to 41 (IVIA…LGLG), 51 to 71 (LGGN…AAAL), 103 to 123 (LIVL…PVHI), 146 to 166 (LIAC…PVGF), 190 to 210 (IPYA…LSVI), 236 to 256 (IGIA…LSQT), 259 to 279 (VEGM…SGVM), 292 to 312 (MVLM…SNVL), 335 to 355 (LGAL…GSSF), 364 to 384 (IFVP…AIIG), and 421 to 441 (VPTF…AALV).

It localises to the cell membrane. This chain is Putative amino acid transporter YuiF (yuiF), found in Bacillus subtilis (strain 168).